Consider the following 626-residue polypeptide: Extracellular metalloproteinase 1 (626 aa).

The N-terminal stretch at 1–17 (MLSSLLAGAGLVALAAS) is a signal peptide. The propeptide occupies 18–241 (HPTSHGNALT…IHGVVDYSAD (224 aa)). N-linked (GlcNAc...) asparagine glycosylation occurs at asparagine 315. Residue histidine 425 coordinates Zn(2+). Glutamate 426 is an active-site residue. Histidine 429 is a binding site for Zn(2+). Residues 606 to 626 (GSGARYSSTARTGSTALPSGC) form a disordered region. Over residues 610–626 (RYSSTARTGSTALPSGC) the composition is skewed to polar residues.

The protein belongs to the peptidase M36 family. Zn(2+) serves as cofactor.

It localises to the secreted. In terms of biological role, secreted metalloproteinase that allows assimilation of proteinaceous substrates. The protein is Extracellular metalloproteinase 1 (MEP1) of Phaeosphaeria nodorum (strain SN15 / ATCC MYA-4574 / FGSC 10173) (Glume blotch fungus).